The chain runs to 156 residues: Deoxyuridine 5'-triphosphate nucleotidohydrolase (156 aa).

Substrate-binding positions include 74–76, N87, 91–93, and K101; these read RSG and TID.

Belongs to the dUTPase family. It depends on Mg(2+) as a cofactor.

The enzyme catalyses dUTP + H2O = dUMP + diphosphate + H(+). The protein operates within pyrimidine metabolism; dUMP biosynthesis; dUMP from dCTP (dUTP route): step 2/2. This enzyme is involved in nucleotide metabolism: it produces dUMP, the immediate precursor of thymidine nucleotides and it decreases the intracellular concentration of dUTP so that uracil cannot be incorporated into DNA. This is Deoxyuridine 5'-triphosphate nucleotidohydrolase from Wolbachia sp. subsp. Brugia malayi (strain TRS).